A 175-amino-acid chain; its full sequence is Macro domain-containing protein TTE0995 (175 aa).

A Macro domain is found at 1 to 174 (MKEKIKLIKG…VYSKAYEELD (174 aa)).

Belongs to the MacroD-type family.

The sequence is that of Macro domain-containing protein TTE0995 from Caldanaerobacter subterraneus subsp. tengcongensis (strain DSM 15242 / JCM 11007 / NBRC 100824 / MB4) (Thermoanaerobacter tengcongensis).